We begin with the raw amino-acid sequence, 262 residues long: Probable DNA polymerase sliding clamp 1 (262 aa).

The DNA-binding element occupies 67 to 86 (KCEHTYELGVNVLNMFKLLR).

This sequence belongs to the PCNA family.

Functionally, sliding clamp subunit. Responsible for tethering the catalytic subunit of DNA polymerase to DNA during high-speed replication. This chain is Probable DNA polymerase sliding clamp 1, found in Chlorella (PBCV-1).